A 277-amino-acid chain; its full sequence is MSGWGMPRPVFIVSDHTGLTAENIARALLTHFPGQPLRYLRRPFTSDAQAAQAVVSEVEALAASGERPLIFTTTTQPDVLEALQTAPAQVFDLLTENLRLLEGEFAEPPQLGAGGHHDMQDSEAYLSRMEALDFALATDDGIGDKQYGLSDVILVGVSRAGKTPTSLFLALQHGIRASNYPLAEDDFEREGLPAPLEQYRSKLFGLTIDPRRLHAIRTQRKPGSKYASIEQCEYEVRRASALFARLGLPVKDTTSASVEEIAAGVLALLRQSGRLEG.

ADP is bound at residue 156–163 (GVSRAGKT).

Belongs to the pyruvate, phosphate/water dikinase regulatory protein family. PSRP subfamily.

The catalysed reaction is [pyruvate, water dikinase] + ADP = [pyruvate, water dikinase]-phosphate + AMP + H(+). It carries out the reaction [pyruvate, water dikinase]-phosphate + phosphate + H(+) = [pyruvate, water dikinase] + diphosphate. Functionally, bifunctional serine/threonine kinase and phosphorylase involved in the regulation of the phosphoenolpyruvate synthase (PEPS) by catalyzing its phosphorylation/dephosphorylation. The sequence is that of Putative phosphoenolpyruvate synthase regulatory protein from Deinococcus radiodurans (strain ATCC 13939 / DSM 20539 / JCM 16871 / CCUG 27074 / LMG 4051 / NBRC 15346 / NCIMB 9279 / VKM B-1422 / R1).